Here is a 166-residue protein sequence, read N- to C-terminus: uncharacterized protein (166 aa).

Residues 25–116 (PEEPPLWVPP…QGADEVHSQH (92 aa)) are disordered. S105 is modified (phosphoserine).

This is an uncharacterized protein from Rattus norvegicus (Rat).